A 204-amino-acid chain; its full sequence is Holliday junction branch migration complex subunit RuvA (204 aa).

The tract at residues 1–64 (MIGRLRGILL…EDAQLLYGFN (64 aa)) is domain I. The domain II stretch occupies residues 65–143 (TVKERALFRE…GWGAGDLFTP (79 aa)). The interval 144–155 (FTDAAPTDSAAA) is flexible linker. The interval 156 to 204 (SSNSAEEEAVSALLALGYKPTQASKVVSQIAKPDMSSEQLIREALKSMV) is domain III.

This sequence belongs to the RuvA family. Homotetramer. Forms an RuvA(8)-RuvB(12)-Holliday junction (HJ) complex. HJ DNA is sandwiched between 2 RuvA tetramers; dsDNA enters through RuvA and exits via RuvB. An RuvB hexamer assembles on each DNA strand where it exits the tetramer. Each RuvB hexamer is contacted by two RuvA subunits (via domain III) on 2 adjacent RuvB subunits; this complex drives branch migration. In the full resolvosome a probable DNA-RuvA(4)-RuvB(12)-RuvC(2) complex forms which resolves the HJ.

It localises to the cytoplasm. Its function is as follows. The RuvA-RuvB-RuvC complex processes Holliday junction (HJ) DNA during genetic recombination and DNA repair, while the RuvA-RuvB complex plays an important role in the rescue of blocked DNA replication forks via replication fork reversal (RFR). RuvA specifically binds to HJ cruciform DNA, conferring on it an open structure. The RuvB hexamer acts as an ATP-dependent pump, pulling dsDNA into and through the RuvAB complex. HJ branch migration allows RuvC to scan DNA until it finds its consensus sequence, where it cleaves and resolves the cruciform DNA. This chain is Holliday junction branch migration complex subunit RuvA, found in Vibrio parahaemolyticus serotype O3:K6 (strain RIMD 2210633).